Here is a 360-residue protein sequence, read N- to C-terminus: MFVDSVEIIIASGKGGPGMVSFRREKFVIKGGPDGGDGGDGGDVYFEVDNNTDTLASFRGTKHHKAKNGAPGGTRNCTGKKGEDKIIVVPPGTQVFVDDTLWLDLVEPKKRVLALKGGKGGLGNAHFKGATKQQPTYAQKGLEGVEKCVRLELKLIADIGLVGFPNAGKSTLISTISNAKPKIANYEFTTLVPNLGVVSVDEKSGFLMADIPGIIEGASQGKGLGISFLKHIERTKVLAFVLDASRLDLGIKEQYQRLRLELEKFSPALANKPFGVLLNKCDVVENIDKMTRDFCAFLNLEAQKLEAFDLEPYSGFLHPHLTSDFENDPNEKSALFVLPLSAVSALNAHALKFVLLKALQ.

One can recognise an Obg domain in the interval 1-156 (MFVDSVEIII…KCVRLELKLI (156 aa)). The OBG-type G domain maps to 157-360 (ADIGLVGFPN…LKFVLLKALQ (204 aa)). GTP contacts are provided by residues 163–170 (GFPNAGKS), 188–192 (FTTLV), 210–213 (DIPG), 279–282 (NKCD), and 341–343 (SAV). Positions 170 and 190 each coordinate Mg(2+).

It belongs to the TRAFAC class OBG-HflX-like GTPase superfamily. OBG GTPase family. As to quaternary structure, monomer. Mg(2+) serves as cofactor.

The protein localises to the cytoplasm. Its function is as follows. An essential GTPase which binds GTP, GDP and possibly (p)ppGpp with moderate affinity, with high nucleotide exchange rates and a fairly low GTP hydrolysis rate. Plays a role in control of the cell cycle, stress response, ribosome biogenesis and in those bacteria that undergo differentiation, in morphogenesis control. The polypeptide is GTPase Obg (Helicobacter pylori (strain P12)).